The chain runs to 1111 residues: Putative leucine--tRNA ligase, cytoplasmic (1111 aa).

The 'HIGH' region motif lies at 74–84 (PYMNGALHLGH). S460 bears the Phosphoserine mark. Positions 737–741 (KMSKS) match the 'KMSKS' region motif. K740 lines the ATP pocket.

Belongs to the class-I aminoacyl-tRNA synthetase family.

The protein resides in the cytoplasm. It catalyses the reaction tRNA(Leu) + L-leucine + ATP = L-leucyl-tRNA(Leu) + AMP + diphosphate. This is Putative leucine--tRNA ligase, cytoplasmic (lrs1) from Schizosaccharomyces pombe (strain 972 / ATCC 24843) (Fission yeast).